A 698-amino-acid polypeptide reads, in one-letter code: Polyribonucleotide nucleotidyltransferase (698 aa).

Residues aspartate 485 and aspartate 491 each coordinate Mg(2+). Residues 552 to 611 (PRITTIKINPEKIRDVIGKGGAVIRALTEETGTTIELDDNGTVKIASSNGEATKEAIRRI) enclose the KH domain. One can recognise an S1 motif domain in the interval 621–689 (GRIYNGKVIR…RQGRVRLSIK (69 aa)).

Belongs to the polyribonucleotide nucleotidyltransferase family. Component of the RNA degradosome, which is a multiprotein complex involved in RNA processing and mRNA degradation. It depends on Mg(2+) as a cofactor.

It localises to the cytoplasm. The enzyme catalyses RNA(n+1) + phosphate = RNA(n) + a ribonucleoside 5'-diphosphate. Involved in mRNA degradation. Catalyzes the phosphorolysis of single-stranded polyribonucleotides processively in the 3'- to 5'-direction. This is Polyribonucleotide nucleotidyltransferase from Shewanella frigidimarina (strain NCIMB 400).